Consider the following 486-residue polypeptide: MTTVYTLVSWLAILGYWLLIAGVTLRILMKRRAVPSAMAWLLIIYILPLVGIIAYLAVGELHLGKRRAERARAMWPSTAKWLNDLKACKHIFAEENSSVAAPLFKLCERRQGIAGVKGNQLQLMTESDDVMQALIRDIQLARHNIEIVFYIWQPGGMADQVAESLMAAARRGIHCRLMLDSAGSVAFFRSPWPELMRNAGIEVVEALKVNLMRVFLRRMDLRQHRKMIMIDNYIAYTGSMNMVDPRYFKQDAGVGQWIDLMARMEGPIATAMGIIYSCDWEIETGKRILPPPPDVNIMPFEQASGHTIHTIASGPGFPEDLIHQALLTAAYSAREYLIMTTPYFVPSDDLLHAICTAAQRGVDVSIILPRKNDSMLVGWASRAFFTELLAAGVKIYQFEGGLLHTKSVLVDGELSLVGTVNLDMRSLWLNFEITLAIDDKGFGADLAAVQDDYISRSRLLDARLWLKRPLWQRVAERLFYFFSPLL.

A run of 2 helical transmembrane segments spans residues 3-23 (TVYT…IAGV) and 38-58 (MAWL…YLAV). 2 PLD phosphodiesterase domains span residues 219 to 246 (MDLR…VDPR) and 399 to 426 (EGGL…DMRS). Catalysis depends on residues H224, K226, D231, H404, K406, and D411.

This sequence belongs to the phospholipase D family. Cardiolipin synthase subfamily. ClsA sub-subfamily.

It localises to the cell inner membrane. The enzyme catalyses 2 a 1,2-diacyl-sn-glycero-3-phospho-(1'-sn-glycerol) = a cardiolipin + glycerol. Its function is as follows. Catalyzes the reversible phosphatidyl group transfer from one phosphatidylglycerol molecule to another to form cardiolipin (CL) (diphosphatidylglycerol) and glycerol. This chain is Cardiolipin synthase A, found in Shigella boydii serotype 4 (strain Sb227).